The primary structure comprises 123 residues: Small ribosomal subunit protein uS12 (123 aa).

The segment at 1 to 30 (MPTIQQLIRKPRQPKVQRSKSQHLQSCPQK) is disordered. Residues 9-21 (RKPRQPKVQRSKS) are compositionally biased toward basic residues. D89 bears the 3-methylthioaspartic acid mark.

Belongs to the universal ribosomal protein uS12 family. As to quaternary structure, part of the 30S ribosomal subunit. Contacts proteins S8 and S17. May interact with IF1 in the 30S initiation complex.

With S4 and S5 plays an important role in translational accuracy. In terms of biological role, interacts with and stabilizes bases of the 16S rRNA that are involved in tRNA selection in the A site and with the mRNA backbone. Located at the interface of the 30S and 50S subunits, it traverses the body of the 30S subunit contacting proteins on the other side and probably holding the rRNA structure together. The combined cluster of proteins S8, S12 and S17 appears to hold together the shoulder and platform of the 30S subunit. The sequence is that of Small ribosomal subunit protein uS12 from Paracoccus denitrificans (strain Pd 1222).